The following is a 229-amino-acid chain: Large ribosomal subunit protein uL1 (229 aa).

It belongs to the universal ribosomal protein uL1 family. In terms of assembly, part of the 50S ribosomal subunit.

Binds directly to 23S rRNA. The L1 stalk is quite mobile in the ribosome, and is involved in E site tRNA release. Its function is as follows. Protein L1 is also a translational repressor protein, it controls the translation of the L11 operon by binding to its mRNA. This is Large ribosomal subunit protein uL1 from Mycoplasmopsis pulmonis (strain UAB CTIP) (Mycoplasma pulmonis).